The sequence spans 145 residues: Thioredoxin C-3 (145 aa).

Heme-binding residues include C25, C28, and H29. A Thioredoxin domain is found at 29 to 140 (HQALLPLEPI…LQQWLDQQLQ (112 aa)). C65 and C68 are disulfide-bonded.

It belongs to the thioredoxin family.

Functionally, participates in various redox reactions through the reversible oxidation of its active center dithiol to a disulfide and catalyzes dithiol-disulfide exchange reactions. This is Thioredoxin C-3 from Corynebacterium nephridii.